Here is a 524-residue protein sequence, read N- to C-terminus: uncharacterized protein (524 aa).

Over residues 83-101 the composition is skewed to polar residues; that stretch reads NSTPSKQAKPLQRNSPYQG. Disordered regions lie at residues 83–108 and 155–179; these read NSTPSKQAKPLQRNSPYQGNSQSENQ and PPCNIETNEDDSGNNEYNNNKKRPR.

The protein resides in the cytoplasm. This is an uncharacterized protein from Saccharomyces cerevisiae (strain ATCC 204508 / S288c) (Baker's yeast).